The sequence spans 359 residues: AA9 family lytic polysaccharide monooxygenase B (359 aa).

Residues 1-18 (MQLFTSFSLLAVASFASA) form the signal peptide. Cu(2+) is bound by residues histidine 19 and histidine 102. Intrachain disulfides connect cysteine 72–cysteine 190 and cysteine 113–cysteine 117. N-linked (GlcNAc...) asparagine glycosylation occurs at asparagine 150. O2-binding residues include histidine 176 and glutamine 185. Tyrosine 187 provides a ligand contact to Cu(2+). Residues 241–310 (GGSPGNSAEP…STNINPTSLK (70 aa)) form a disordered region. Residues 245–254 (GNSAEPQPQH) show a composition bias toward polar residues. Residues 255–304 (TSTAVSTAKTASTSSLTTSVTITSQAPSNTANPPQSITTTTTPKPQSTNI) are compositionally biased toward low complexity. Asparagine 345 carries an N-linked (GlcNAc...) asparagine glycan.

It belongs to the polysaccharide monooxygenase AA9 family. It depends on Cu(2+) as a cofactor.

The protein resides in the secreted. It catalyses the reaction [(1-&gt;4)-beta-D-glucosyl]n+m + reduced acceptor + O2 = 4-dehydro-beta-D-glucosyl-[(1-&gt;4)-beta-D-glucosyl]n-1 + [(1-&gt;4)-beta-D-glucosyl]m + acceptor + H2O.. Its function is as follows. Lytic polysaccharide monooxygenase (LPMO) that depolymerizes crystalline and amorphous polysaccharides via the oxidation of scissile alpha- or beta-(1-4)-glycosidic bonds, yielding C1 and C4 oxidation products. Catalysis by LPMOs requires the reduction of the active-site copper from Cu(II) to Cu(I) by a reducing agent and H(2)O(2) or O(2) as a cosubstrate. Active on cellulose and on xyloglucan for deconstruction of plant biomass. The chain is AA9 family lytic polysaccharide monooxygenase B from Geotrichum candidum (Oospora lactis).